The sequence spans 160 residues: SsrA-binding protein (160 aa).

A disordered region spans residues 131 to 160; it reads KKEYDKRDTEKARDSDREIQRAIRSKGKED.

Belongs to the SmpB family.

It is found in the cytoplasm. In terms of biological role, required for rescue of stalled ribosomes mediated by trans-translation. Binds to transfer-messenger RNA (tmRNA), required for stable association of tmRNA with ribosomes. tmRNA and SmpB together mimic tRNA shape, replacing the anticodon stem-loop with SmpB. tmRNA is encoded by the ssrA gene; the 2 termini fold to resemble tRNA(Ala) and it encodes a 'tag peptide', a short internal open reading frame. During trans-translation Ala-aminoacylated tmRNA acts like a tRNA, entering the A-site of stalled ribosomes, displacing the stalled mRNA. The ribosome then switches to translate the ORF on the tmRNA; the nascent peptide is terminated with the 'tag peptide' encoded by the tmRNA and targeted for degradation. The ribosome is freed to recommence translation, which seems to be the essential function of trans-translation. In Azotobacter vinelandii (strain DJ / ATCC BAA-1303), this protein is SsrA-binding protein.